The chain runs to 85 residues: Alpha-defensin 11 (85 aa).

Positions 1 to 11 are cleaved as a signal peptide; sequence ALVLLAFQVQA. Residues 12-50 constitute a propeptide that is removed on maturation; the sequence is DPIQNTDEETKTEEQPGEEDQAVSVSFGDPEGTSLQEES. Residues 14–46 are disordered; it reads IQNTDEETKTEEQPGEEDQAVSVSFGDPEGTSL. Intrachain disulfides connect C56-C84, C58-C73, and C63-C83.

The protein belongs to the alpha-defensin family. In terms of tissue distribution, paneth cells of the small bowel.

It localises to the secreted. Its function is as follows. Probably contributes to the antimicrobial barrier function of the small bowel mucosa. The polypeptide is Alpha-defensin 11 (Defa11) (Mus musculus (Mouse)).